The sequence spans 112 residues: Prothymosin alpha-B (112 aa).

A disordered region spans residues 1 to 112 (MSDTAVDASV…TKKQKTDEDD (112 aa)). The span at 9–35 (SVEKSTKDLKAKEKEVVEEAENGKDKP) shows a compositional bias: basic and acidic residues. Composition is skewed to acidic residues over residues 41–83 (ENEE…DEVE) and 92–101 (EDDEDDDDDV). Over residues 102-112 (ETKKQKTDEDD) the composition is skewed to basic and acidic residues.

Belongs to the pro/parathymosin family.

Its subcellular location is the nucleus. The sequence is that of Prothymosin alpha-B (ptma-b) from Xenopus laevis (African clawed frog).